Consider the following 597-residue polypeptide: Arginine--tRNA ligase (597 aa).

Positions 125–135 match the 'HIGH' region motif; the sequence is PNTNKPLHLGH.

Belongs to the class-I aminoacyl-tRNA synthetase family. In terms of assembly, monomer.

It is found in the cytoplasm. The catalysed reaction is tRNA(Arg) + L-arginine + ATP = L-arginyl-tRNA(Arg) + AMP + diphosphate. The sequence is that of Arginine--tRNA ligase from Bacteroides fragilis (strain ATCC 25285 / DSM 2151 / CCUG 4856 / JCM 11019 / LMG 10263 / NCTC 9343 / Onslow / VPI 2553 / EN-2).